A 948-amino-acid polypeptide reads, in one-letter code: Protocadherin alpha-10 (948 aa).

The signal sequence occupies residues 1–28 (MVSRCSCLGVQCLLLSLLLLAAWEVGSG). 6 Cadherin domains span residues 29 to 132 (QLHY…PPRF), 133 to 241 (SVTE…APIF), 242 to 349 (DRPV…SPEV), 350 to 454 (IVTS…APAF), 455 to 564 (AQPE…APAL), and 587 to 689 (GHVV…APEV). At 29–695 (QLHYSVYEEA…APEVALVDVN (667 aa)) the chain is on the extracellular side. N-linked (GlcNAc...) asparagine glycosylation is found at Asn-256 and Asn-264. Asn-547 carries N-linked (GlcNAc...) asparagine glycosylation. A helical membrane pass occupies residues 696-716 (VYLIIAICAVSSLLVLTLLLY). Residues 717 to 948 (TALRCSAAPT…GNSTTDNSDQ (232 aa)) lie on the Cytoplasmic side of the membrane. PXXP repeat units lie at residues 732-735 (PVKP), 772-775 (PSLP), 797-800 (PRQP), 830-833 (PGGP), 871-874 (PGNP), and 889-892 (PGSP). The segment at 732–892 (PVKPTLVCSS…PDKFIIPGSP (161 aa)) is 6 X 4 AA repeats of P-X-X-P. 2 disordered regions span residues 783–804 (DGED…NPDW) and 827–948 (RAGP…NSDQ). Basic and acidic residues predominate over residues 907 to 921 (DKSDFITFGKKEETK).

The protein resides in the cell membrane. In terms of biological role, potential calcium-dependent cell-adhesion protein. May be involved in the establishment and maintenance of specific neuronal connections in the brain. This chain is Protocadherin alpha-10 (PCDHA10), found in Pan troglodytes (Chimpanzee).